The following is a 72-amino-acid chain: Dermaseptin AA-3-4 (72 aa).

The signal sequence occupies residues 1 to 22 (MAFLKKSLFLVLFLGLVSLSIC). The propeptide occupies 23 to 43 (DEEKRENEDEEEQEDDEQSEE). The interval 24–45 (EEKRENEDEEEQEDDEQSEEKR) is disordered. Acidic residues predominate over residues 30-41 (EDEEEQEDDEQS).

This sequence belongs to the frog skin active peptide (FSAP) family. Expressed by the skin glands.

It localises to the secreted. Functionally, possesses a potent antimicrobial activity against Gram-positive and Gram-negative bacteria. Probably acts by disturbing membrane functions with its amphipathic structure. The chain is Dermaseptin AA-3-4 from Agalychnis annae (Blue-sided leaf frog).